The sequence spans 437 residues: Trigger factor (437 aa).

The 87-residue stretch at 165–251 (GDLVVIDFKG…LHTIKEKEKI (87 aa)) folds into the PPIase FKBP-type domain.

It belongs to the FKBP-type PPIase family. Tig subfamily.

The protein resides in the cytoplasm. The enzyme catalyses [protein]-peptidylproline (omega=180) = [protein]-peptidylproline (omega=0). In terms of biological role, involved in protein export. Acts as a chaperone by maintaining the newly synthesized protein in an open conformation. Functions as a peptidyl-prolyl cis-trans isomerase. The sequence is that of Trigger factor from Nitratiruptor sp. (strain SB155-2).